We begin with the raw amino-acid sequence, 885 residues long: Protein PTHB1 (885 aa).

The tract at residues 1-406 is seven-bladed beta-propeller; it reads MSLFKARDWW…LQGVWPLTEQ (406 aa). The segment at 684–764 is interaction with LZTL1; it reads RDKTPAPLQH…FLPLQEDTQE (81 aa).

Part of BBSome complex, that contains BBS1, BBS2, BBS4, BBS5, BBS7, BBS8/TTC8, BBS9 and BBIP10. Interacts with LZTL1; the interaction mediates the association of LZTL1 with the BBsome complex and regulates BBSome ciliary trafficking.

The protein localises to the cell projection. The protein resides in the cilium membrane. It is found in the cytoplasm. Its subcellular location is the cytoskeleton. It localises to the microtubule organizing center. The protein localises to the centrosome. The protein resides in the centriolar satellite. Its function is as follows. The BBSome complex is thought to function as a coat complex required for sorting of specific membrane proteins to the primary cilia. The BBSome complex is required for ciliogenesis but is dispensable for centriolar satellite function. This ciliogenic function is mediated in part by the Rab8 GDP/GTP exchange factor, which localizes to the basal body and contacts the BBSome. Rab8(GTP) enters the primary cilium and promotes extension of the ciliary membrane. Firstly the BBSome associates with the ciliary membrane and binds to RAB3IP/Rabin8, the guanosyl exchange factor (GEF) for Rab8 and then the Rab8-GTP localizes to the cilium and promotes docking and fusion of carrier vesicles to the base of the ciliary membrane. Required for proper BBSome complex assembly and its ciliary localization. This Mus musculus (Mouse) protein is Protein PTHB1 (Bbs9).